Reading from the N-terminus, the 298-residue chain is tRNA pseudouridine synthase A (298 aa).

D56 functions as the Nucleophile in the catalytic mechanism. Y125 is a substrate binding site.

The protein belongs to the tRNA pseudouridine synthase TruA family. As to quaternary structure, homodimer.

The enzyme catalyses uridine(38/39/40) in tRNA = pseudouridine(38/39/40) in tRNA. In terms of biological role, formation of pseudouridine at positions 38, 39 and 40 in the anticodon stem and loop of transfer RNAs. In Bifidobacterium animalis subsp. lactis (strain AD011), this protein is tRNA pseudouridine synthase A.